The primary structure comprises 138 residues: Glutaredoxin-C7 (138 aa).

The interval 17 to 40 (SSTRGGGGGGMLGLTLFDPPGGEQ) is disordered. The region spanning 42–137 (AERIGRLVRE…PRLREVGALC (96 aa)) is the Glutaredoxin domain. The cysteines at positions 62 and 65 are disulfide-linked.

Belongs to the glutaredoxin family. CC-type subfamily.

The protein localises to the cytoplasm. Its function is as follows. Has a glutathione-disulfide oxidoreductase activity in the presence of NADPH and glutathione reductase. Reduces low molecular weight disulfides and proteins. This is Glutaredoxin-C7 (GRXC7) from Oryza sativa subsp. japonica (Rice).